A 309-amino-acid polypeptide reads, in one-letter code: Short-chain dehydrogenase/reductase ARMGADRAFT_1018437 (309 aa).

Residues Lys-64, Asp-86, and Asn-113 each coordinate NADP(+). The active-site Proton donor is the Ser-167. NADP(+) is bound by residues Tyr-196 and Lys-200. Residue Tyr-196 is the Proton acceptor of the active site. The Lowers pKa of active site Tyr role is filled by Lys-200.

This sequence belongs to the short-chain dehydrogenases/reductases (SDR) family.

Its pathway is secondary metabolite biosynthesis. In terms of biological role, short-chain dehydrogenase/reductase, part of the gene cluster that mediates the biosynthesis of melleolides, a range of antifungal and phytotoxic polyketide derivatives composed of an orsellinic acid (OA) moiety esterified to various sesquiterpene alcohols. The first step in melleolides biosynthesis is performed by the delta(6)-protoilludene synthase PRO1 which catalyzes the cyclization of farnesyl diphosphate to protoilludene. The orsellinic acid synthase armB produces OA by condensing acetyl-CoA with 3 malonyl-CoA units in a three-round chain elongation reaction folowed by a C2-C7 ring closure. ArmB further catalyzes the trans-esterification of OA to the various sesquiterpene alcohols resulting from the hydroxylation of protoilludene. The melleolides cluster also includes 5 cytochrome P450 monooxygenases, 4 NAD(+)-dependent oxidoreductases, one flavin-dependent oxidoreductase, and one O-methyltransferase. The cytochrome P450 monooxygenases may be involved in protoilludene hydroxylation to elaborate melleolides with multiple alcohol groups, such as melleolide D, which carries alcohol functionalities at C-4, C-5, C-10, and C-13. The role of the NAD(+)-dependent enzymes remains unknown. Numerous melleolides, including arnamial, show 5'-O-methylation of the aromatic moiety which may be catalyzed by the methyltransferase encoded in the cluster. The flavin-dependent oxidoreductase might represent the dehydrogenase yielding the aldehyde in position 1 of arnamial and other melleolides. Finally, several halogenase localized outside of the cluster, are able to catalyze the transfer of a single chlorine atom to the melleolide backbone, resulting in a 6'-chloromelleolide product. The protein is Short-chain dehydrogenase/reductase ARMGADRAFT_1018437 of Armillaria gallica (Bulbous honey fungus).